The chain runs to 149 residues: Large ribosomal subunit protein bL9 (149 aa).

It belongs to the bacterial ribosomal protein bL9 family.

Its function is as follows. Binds to the 23S rRNA. The sequence is that of Large ribosomal subunit protein bL9 from Bacillus licheniformis (strain ATCC 14580 / DSM 13 / JCM 2505 / CCUG 7422 / NBRC 12200 / NCIMB 9375 / NCTC 10341 / NRRL NRS-1264 / Gibson 46).